The following is a 699-amino-acid chain: MVAFGKKLKERSIQEWQGYYINYKLMKKKVKQYSRQLEGGNLERRHVLKDFSRMLDNQIEKIALFMLEQQGLLASRLQTLRGSHDALQEQPDISHMSYLKEEYRAVGQDLLKLLFFVEMNAIGIRKILKKFDKRFGYRFTNYYVKTRANHPYSELQQVFRHVGLGAVVGAVSRNLHELQNNQGSYLSIYDQPVLPLQDPVVDSIRAAVDRLTRSTNFLHFMAQHALIMQEELPSPQDEEGEEEDGRYHFMSLLLNLVNTFLYMVNTYIIVPTADDYSMSLGAAATVCGVVIGAMAVAQLFSSVYFSAWSNRSYFKPLIFSSIVLFIGNLLYALAFDFNSIAVLLIGRLFCGLGSARAVNRRYISDCVPLKIRMQASAGFVSASALGMACGPALAGLLQIRFKIYKLTFNQDTLPGWVMAVAWLIYLVWLAISFREPAREPEEIPKTSEESNHSAVQDVNLEKGMKQPLLLTSEEIEEQGEDECDGSEEASEDSRTPANSILAAYRLLTPSVKVQLLIYFMLKYAMEILLSESSVITTYYFGWSTSSVAIFLFCLGLTVLPVNLVVGSYISNMFEDRQILLVSEIMVCVGILLSFHVVVPYTVPQYVCSGLIMFVSAEVLEGVNLSLLSRVMSSRLSRGTYNGGLLSTEAGTIARVIADATITVAGFFGRNMLLNVTLLPSLVICVLSIVATCFTYNSLY.

The 144-residue stretch at 2-145 (VAFGKKLKER…GYRFTNYYVK (144 aa)) folds into the SPX domain. The next 6 membrane-spanning stretches (helical) occupy residues 249 to 269 (FMSL…TYII), 280 to 300 (LGAA…AQLF), 317 to 337 (LIFS…AFDF), 339 to 358 (SIAV…ARAV), 377 to 397 (AGFV…AGLL), and 413 to 433 (LPGW…AISF). Residues 475–490 (IEEQGEDECDGSEEAS) show a composition bias toward acidic residues. A disordered region spans residues 475–494 (IEEQGEDECDGSEEASEDSR). Transmembrane regions (helical) follow at residues 515–535 (LLIY…SSVI), 546–566 (SVAI…LVVG), 578–598 (ILLV…HVVV), 606–626 (VCSG…NLSL), and 671–691 (MLLN…IVAT).

This sequence belongs to the major facilitator superfamily.

It localises to the membrane. The sequence is that of SPX domain-containing membrane protein At4g22990 from Arabidopsis thaliana (Mouse-ear cress).